We begin with the raw amino-acid sequence, 85 residues long: Small ribosomal subunit protein uS17 (85 aa).

It belongs to the universal ribosomal protein uS17 family. In terms of assembly, part of the 30S ribosomal subunit.

Its function is as follows. One of the primary rRNA binding proteins, it binds specifically to the 5'-end of 16S ribosomal RNA. The sequence is that of Small ribosomal subunit protein uS17 from Aggregatibacter actinomycetemcomitans (Actinobacillus actinomycetemcomitans).